A 230-amino-acid chain; its full sequence is Ureidoacrylate amidohydrolase RutB (230 aa).

Aspartate 24 functions as the Proton acceptor in the catalytic mechanism. Lysine 133 is a catalytic residue. Residue cysteine 166 is the Nucleophile of the active site.

The protein belongs to the isochorismatase family. RutB subfamily.

The enzyme catalyses (Z)-3-ureidoacrylate + H2O + H(+) = (Z)-3-aminoacrylate + NH4(+) + CO2. It catalyses the reaction (Z)-3-ureidoacrylate + H2O = (Z)-3-aminoacrylate + carbamate + H(+). It carries out the reaction (Z)-2-methylureidoacrylate + H2O + H(+) = (Z)-2-methylaminoacrylate + NH4(+) + CO2. Its function is as follows. Hydrolyzes ureidoacrylate to form aminoacrylate and carbamate. The carbamate hydrolyzes spontaneously, thereby releasing one of the nitrogen atoms of the pyrimidine ring as ammonia and one of its carbon atoms as CO2. The polypeptide is Ureidoacrylate amidohydrolase RutB (Escherichia coli O44:H18 (strain 042 / EAEC)).